Reading from the N-terminus, the 430-residue chain is Enolase (430 aa).

Glutamine 163 lines the (2R)-2-phosphoglycerate pocket. Glutamate 205 functions as the Proton donor in the catalytic mechanism. Residues aspartate 242, glutamate 287, and aspartate 314 each contribute to the Mg(2+) site. Residues lysine 339, arginine 368, serine 369, and lysine 390 each contribute to the (2R)-2-phosphoglycerate site. Residue lysine 339 is the Proton acceptor of the active site.

This sequence belongs to the enolase family. Mg(2+) is required as a cofactor.

It localises to the cytoplasm. The protein resides in the secreted. The protein localises to the cell surface. It carries out the reaction (2R)-2-phosphoglycerate = phosphoenolpyruvate + H2O. It participates in carbohydrate degradation; glycolysis; pyruvate from D-glyceraldehyde 3-phosphate: step 4/5. Its function is as follows. Catalyzes the reversible conversion of 2-phosphoglycerate (2-PG) into phosphoenolpyruvate (PEP). It is essential for the degradation of carbohydrates via glycolysis. This Bacillus licheniformis (strain ATCC 14580 / DSM 13 / JCM 2505 / CCUG 7422 / NBRC 12200 / NCIMB 9375 / NCTC 10341 / NRRL NRS-1264 / Gibson 46) protein is Enolase.